Reading from the N-terminus, the 400-residue chain is Keratin, type I cytoskeletal 19 (400 aa).

The interval 1–79 (MTSYSYRQSS…TASDGLLAGN (79 aa)) is head. Arg-7 bears the Omega-N-methylarginine mark. Ser-14 and Ser-22 each carry phosphoserine. Arg-24 is modified (asymmetric dimethylarginine; alternate). Arg-24 bears the Omega-N-methylarginine; alternate mark. Residue Arg-32 is modified to Omega-N-methylarginine. 2 positions are modified to phosphoserine: Ser-35 and Ser-40. Omega-N-methylarginine is present on residues Arg-43 and Arg-51. A phosphoserine mark is found at Ser-57 and Ser-72. Positions 80 to 115 (EKLTMQNLNDRLASYLDKVRALEAANGELEVKIRDW) are coil 1A. Residues 80-391 (EKLTMQNLND…SLLEGQEDHY (312 aa)) form the IF rod domain. The segment at 116–133 (YQKQGPGPSRDYSHYYTT) is linker 1. The segment at 134 to 225 (IQDLRDKILG…KNHEEEISTL (92 aa)) is coil 1B. A linker 12 region spans residues 226 to 248 (RGQVGGQVSVEVDSAPGTDLAKI). The necessary for interaction with PNN stretch occupies residues 244–390 (DLAKILSDMR…RSLLEGQEDH (147 aa)). The tract at residues 249 to 387 (LSDMRSQYEV…ATYRSLLEGQ (139 aa)) is coil 2. Position 323 is a phosphothreonine (Thr-323). The segment at 388–400 (EDHYSNLSASKVL) is rod-like helical tail. Residue Tyr-391 is modified to Phosphotyrosine. Position 395 is a phosphoserine (Ser-395).

This sequence belongs to the intermediate filament family. Heterotetramer of two type I and two type II keratins. Interacts with PNN and the actin-binding domain of DMD.

Its function is as follows. Involved in the organization of myofibers. Together with KRT8, helps to link the contractile apparatus to dystrophin at the costameres of striated muscle. This Pongo abelii (Sumatran orangutan) protein is Keratin, type I cytoskeletal 19.